The following is a 145-amino-acid chain: Hemoglobin subunit beta-2 (145 aa).

Residues 2 to 145 (HLTAEDRKEI…GVSHALGHGY (144 aa)) form the Globin domain. Heme b contacts are provided by H63 and H92.

It belongs to the globin family. In terms of assembly, minor hemoglobin is a tetramer of two alpha-2 chains and two beta-2 chains. In terms of tissue distribution, red blood cells.

Functionally, involved in oxygen transport from the lung to the various peripheral tissues. The polypeptide is Hemoglobin subunit beta-2 (HBB2) (Triturus cristatus (Great crested newt)).